The chain runs to 565 residues: Proline--tRNA ligase (565 aa).

The protein belongs to the class-II aminoacyl-tRNA synthetase family. ProS type 1 subfamily. In terms of assembly, homodimer.

The protein localises to the cytoplasm. It carries out the reaction tRNA(Pro) + L-proline + ATP = L-prolyl-tRNA(Pro) + AMP + diphosphate. Catalyzes the attachment of proline to tRNA(Pro) in a two-step reaction: proline is first activated by ATP to form Pro-AMP and then transferred to the acceptor end of tRNA(Pro). As ProRS can inadvertently accommodate and process non-cognate amino acids such as alanine and cysteine, to avoid such errors it has two additional distinct editing activities against alanine. One activity is designated as 'pretransfer' editing and involves the tRNA(Pro)-independent hydrolysis of activated Ala-AMP. The other activity is designated 'posttransfer' editing and involves deacylation of mischarged Ala-tRNA(Pro). The misacylated Cys-tRNA(Pro) is not edited by ProRS. This Francisella tularensis subsp. mediasiatica (strain FSC147) protein is Proline--tRNA ligase.